Here is a 387-residue protein sequence, read N- to C-terminus: Alkanesulfonate monooxygenase (387 aa).

The protein belongs to the SsuD family.

The enzyme catalyses an alkanesulfonate + FMNH2 + O2 = an aldehyde + FMN + sulfite + H2O + 2 H(+). In terms of biological role, catalyzes the desulfonation of aliphatic sulfonates. This chain is Alkanesulfonate monooxygenase, found in Xanthomonas axonopodis pv. citri (strain 306).